Reading from the N-terminus, the 352-residue chain is Quinolinate synthase (352 aa).

Positions 48 and 69 each coordinate iminosuccinate. Cys-114 is a [4Fe-4S] cluster binding site. Iminosuccinate is bound by residues Tyr-140–Asn-142 and Ser-157. [4Fe-4S] cluster is bound at residue Cys-201. Iminosuccinate contacts are provided by residues His-227–Glu-229 and Thr-244. Cys-298 lines the [4Fe-4S] cluster pocket.

This sequence belongs to the quinolinate synthase family. Type 1 subfamily. [4Fe-4S] cluster serves as cofactor.

Its subcellular location is the cytoplasm. The catalysed reaction is iminosuccinate + dihydroxyacetone phosphate = quinolinate + phosphate + 2 H2O + H(+). Its pathway is cofactor biosynthesis; NAD(+) biosynthesis; quinolinate from iminoaspartate: step 1/1. In terms of biological role, catalyzes the condensation of iminoaspartate with dihydroxyacetone phosphate to form quinolinate. The protein is Quinolinate synthase of Pseudomonas entomophila (strain L48).